Reading from the N-terminus, the 211-residue chain is High frequency lysogenization protein HflD homolog (211 aa).

It belongs to the HflD family.

It is found in the cytoplasm. Its subcellular location is the cell membrane. The protein is High frequency lysogenization protein HflD homolog of Buchnera aphidicola subsp. Acyrthosiphon pisum (strain 5A).